The following is a 197-amino-acid chain: Phospholipid hydroperoxide glutathione peroxidase (197 aa).

Ser40 bears the Phosphoserine mark. Residue Sec73 is part of the active site. Sec73 is a non-standard amino acid (selenocysteine).

The protein belongs to the glutathione peroxidase family. As to quaternary structure, monomer. Has a tendency to form higher mass oligomers. Interacts with FUNDC1; this interaction promotes GPX4 recruitment into mitochondria through TOM/TIM complex where it is degraded by mitophagy.

It is found in the mitochondrion. The protein resides in the cytoplasm. The enzyme catalyses a hydroperoxy polyunsaturated fatty acid + 2 glutathione = a hydroxy polyunsaturated fatty acid + glutathione disulfide + H2O. It carries out the reaction 2 glutathione + H2O2 = glutathione disulfide + 2 H2O. It catalyses the reaction tert-butyl hydroperoxide + 2 glutathione = tert-butanol + glutathione disulfide + H2O. The catalysed reaction is cumene hydroperoxide + 2 glutathione = 2-phenylpropan-2-ol + glutathione disulfide + H2O. The enzyme catalyses (9S)-hydroperoxy-(10E,12Z)-octadecadienoate + 2 glutathione = (9S)-hydroxy-(10E,12Z)-octadecadienoate + glutathione disulfide + H2O. It carries out the reaction (13S)-hydroperoxy-(9Z,11E)-octadecadienoate + 2 glutathione = (13S)-hydroxy-(9Z,11E)-octadecadienoate + glutathione disulfide + H2O. It catalyses the reaction (5S)-hydroperoxy-(6E,8Z,11Z,14Z)-eicosatetraenoate + 2 glutathione = (5S)-hydroxy-(6E,8Z,11Z,14Z)-eicosatetraenoate + glutathione disulfide + H2O. The catalysed reaction is (12R)-hydroperoxy-(5Z,8Z,10E,14Z)-eicosatetraenoate + 2 glutathione = (12R)-hydroxy-(5Z,8Z,10E,14Z)-eicosatetraenoate + glutathione disulfide + H2O. The enzyme catalyses (12S)-hydroperoxy-(5Z,8Z,10E,14Z)-eicosatetraenoate + 2 glutathione = (12S)-hydroxy-(5Z,8Z,10E,14Z)-eicosatetraenoate + glutathione disulfide + H2O. It carries out the reaction (15S)-hydroperoxy-(5Z,8Z,11Z,13E)-eicosatetraenoate + 2 glutathione = (15S)-hydroxy-(5Z,8Z,11Z,13E)-eicosatetraenoate + glutathione disulfide + H2O. It catalyses the reaction (5S)-hydroperoxy-(6E,8Z,11Z,14Z,17Z)-eicosapentaenoate + 2 glutathione = (5S)-hydroxy-(6E,8Z,11Z,14Z,17Z)-eicosapentaenoate + glutathione disulfide + H2O. The catalysed reaction is (12S)-hydroperoxy-(5Z,8Z,10E,14Z,17Z)-eicosapentaenoate + 2 glutathione = (12S)-hydroxy-(5Z,8Z,10E,14Z,17Z)-eicosapentaenoate + glutathione disulfide + H2O. The enzyme catalyses (15S)-hydroperoxy-(5Z,8Z,11Z,13E,17Z)-eicosapentaenoate + 2 glutathione = (15S)-hydroxy-(5Z,8Z,11Z,13E,17Z)-eicosapentaenoate + glutathione disulfide + H2O. It carries out the reaction (15S)-hydroperoxy-(11Z,13E)-eicosadienoate + 2 glutathione = (15S)-hydroxy-(11Z,13E)-eicosadienoate + glutathione disulfide + H2O. It catalyses the reaction (17S)-hydroperoxy-(4Z,7Z,10Z,13Z,15E,19Z)-docosahexaenoate + 2 glutathione = (17S)-hydroxy-(4Z,7Z,10Z,13Z,15E,19Z)-docosahexaenoate + glutathione disulfide + H2O. The catalysed reaction is a hydroperoxy-1,2-diacyl-glycero-3-phosphocholine + 2 glutathione = a hydroxy-1,2-diacyl-glycero-3-phosphocholine + glutathione disulfide + H2O. Essential antioxidant peroxidase that directly reduces phospholipid hydroperoxide even if they are incorporated in membranes and lipoproteins. Can also reduce fatty acid hydroperoxide, cholesterol hydroperoxide and thymine hydroperoxide. Plays a key role in protecting cells from oxidative damage by preventing membrane lipid peroxidation. Required to prevent cells from ferroptosis, a non-apoptotic cell death resulting from an iron-dependent accumulation of lipid reactive oxygen species. The presence of selenocysteine (Sec) versus Cys at the active site is essential for life: it provides resistance to overoxidation and prevents cells against ferroptosis. The presence of Sec at the active site is also essential for the survival of a specific type of parvalbumin-positive interneurons, thereby preventing against fatal epileptic seizures. May be required to protect cells from the toxicity of ingested lipid hydroperoxides. Required for normal sperm development and male fertility. Essential for maturation and survival of photoreceptor cells. Plays a role in a primary T-cell response to viral and parasitic infection by protecting T-cells from ferroptosis and by supporting T-cell expansion. Plays a role of glutathione peroxidase in platelets in the arachidonic acid metabolism. Reduces hydroperoxy ester lipids formed by a 15-lipoxygenase that may play a role as down-regulator of the cellular 15-lipoxygenase pathway. Can also reduce small soluble hydroperoxides such as H2O2, cumene hydroperoxide and tert-butyl hydroperoxide. The protein is Phospholipid hydroperoxide glutathione peroxidase of Pongo pygmaeus (Bornean orangutan).